The primary structure comprises 218 residues: Thiamine-phosphate synthase (218 aa).

4-amino-2-methyl-5-(diphosphooxymethyl)pyrimidine is bound by residues 43 to 47 and Asn-78; that span reads QFRDK. Mg(2+) is bound by residues Asp-79 and Asp-98. Ser-117 serves as a coordination point for 4-amino-2-methyl-5-(diphosphooxymethyl)pyrimidine. 143–145 serves as a coordination point for 2-[(2R,5Z)-2-carboxy-4-methylthiazol-5(2H)-ylidene]ethyl phosphate; it reads TNS. Lys-146 lines the 4-amino-2-methyl-5-(diphosphooxymethyl)pyrimidine pocket. 2-[(2R,5Z)-2-carboxy-4-methylthiazol-5(2H)-ylidene]ethyl phosphate is bound by residues Gly-174 and 194 to 195; that span reads IS.

It belongs to the thiamine-phosphate synthase family. It depends on Mg(2+) as a cofactor.

The catalysed reaction is 2-[(2R,5Z)-2-carboxy-4-methylthiazol-5(2H)-ylidene]ethyl phosphate + 4-amino-2-methyl-5-(diphosphooxymethyl)pyrimidine + 2 H(+) = thiamine phosphate + CO2 + diphosphate. It carries out the reaction 2-(2-carboxy-4-methylthiazol-5-yl)ethyl phosphate + 4-amino-2-methyl-5-(diphosphooxymethyl)pyrimidine + 2 H(+) = thiamine phosphate + CO2 + diphosphate. The enzyme catalyses 4-methyl-5-(2-phosphooxyethyl)-thiazole + 4-amino-2-methyl-5-(diphosphooxymethyl)pyrimidine + H(+) = thiamine phosphate + diphosphate. It participates in cofactor biosynthesis; thiamine diphosphate biosynthesis; thiamine phosphate from 4-amino-2-methyl-5-diphosphomethylpyrimidine and 4-methyl-5-(2-phosphoethyl)-thiazole: step 1/1. Its function is as follows. Condenses 4-methyl-5-(beta-hydroxyethyl)thiazole monophosphate (THZ-P) and 2-methyl-4-amino-5-hydroxymethyl pyrimidine pyrophosphate (HMP-PP) to form thiamine monophosphate (TMP). This chain is Thiamine-phosphate synthase, found in Lactococcus lactis subsp. cremoris (strain MG1363).